The following is a 262-amino-acid chain: Glucosamine-6-phosphate deaminase (262 aa).

Asp-63 serves as the catalytic Proton acceptor; for enolization step. Asn-129 serves as the catalytic For ring-opening step. Residue His-131 is the Proton acceptor; for ring-opening step of the active site. Glu-136 acts as the For ring-opening step in catalysis.

It belongs to the glucosamine/galactosamine-6-phosphate isomerase family. NagB subfamily.

It carries out the reaction alpha-D-glucosamine 6-phosphate + H2O = beta-D-fructose 6-phosphate + NH4(+). It participates in amino-sugar metabolism; N-acetylneuraminate degradation; D-fructose 6-phosphate from N-acetylneuraminate: step 5/5. Functionally, catalyzes the reversible isomerization-deamination of glucosamine 6-phosphate (GlcN6P) to form fructose 6-phosphate (Fru6P) and ammonium ion. In Bacillus cereus (strain ZK / E33L), this protein is Glucosamine-6-phosphate deaminase.